A 129-amino-acid polypeptide reads, in one-letter code: Holo-[acyl-carrier-protein] synthase (129 aa).

Asp8 and Glu58 together coordinate Mg(2+).

This sequence belongs to the P-Pant transferase superfamily. AcpS family. Mg(2+) is required as a cofactor.

Its subcellular location is the cytoplasm. It carries out the reaction apo-[ACP] + CoA = holo-[ACP] + adenosine 3',5'-bisphosphate + H(+). Its function is as follows. Transfers the 4'-phosphopantetheine moiety from coenzyme A to a Ser of acyl-carrier-protein. The sequence is that of Holo-[acyl-carrier-protein] synthase from Acidithiobacillus ferrooxidans (strain ATCC 53993 / BNL-5-31) (Leptospirillum ferrooxidans (ATCC 53993)).